The primary structure comprises 591 residues: UvrABC system protein C (591 aa).

In terms of domain architecture, GIY-YIG spans 14 to 91 (DQPGCYLMKD…IKKHDPKYNV (78 aa)). A UVR domain is found at 196-231 (KEVKVELEKKMHKAAEELNFERAKELRDTLGYMEAV).

The protein belongs to the UvrC family. In terms of assembly, interacts with UvrB in an incision complex.

It is found in the cytoplasm. Functionally, the UvrABC repair system catalyzes the recognition and processing of DNA lesions. UvrC both incises the 5' and 3' sides of the lesion. The N-terminal half is responsible for the 3' incision and the C-terminal half is responsible for the 5' incision. This Halalkalibacterium halodurans (strain ATCC BAA-125 / DSM 18197 / FERM 7344 / JCM 9153 / C-125) (Bacillus halodurans) protein is UvrABC system protein C.